A 758-amino-acid polypeptide reads, in one-letter code: Spastin (758 aa).

Residues 1 to 99 are disordered; it reads MVRTKNQSSS…PTTCSPRSGH (99 aa). The Cytoplasmic segment spans residues 1–121; the sequence is MVRTKNQSSS…KQNLYVVSFP (121 aa). The interval 1 to 210 is required for localization to punctate cytoplasmic foci; the sequence is MVRTKNQSSS…RPIQPLEMAA (210 aa). 4 stretches are compositionally biased toward low complexity: residues 8–28, 43–58, 66–76, and 85–95; these read SSSS…SSGA, RSSS…AGGS, SSNRRSPGSSP, and TDDLTPTTCSP. The segment at residues 122–142 is an intramembrane region (helical); the sequence is IIFLFNVLRSLIYQLFCIFRY. Residues 143-758 are Cytoplasmic-facing; it reads LYGASTKVIY…WSQDYGDITI (616 aa). Composition is skewed to polar residues over residues 169–180 and 189–198; these read SKEQQQSLNHPS and QEQQLSNQPQ. A disordered region spans residues 169–203; it reads SKEQQQSLNHPSELSREGDGQEQQLSNQPQRFRPI. The sufficient for interaction with microtubules and microtubule severing stretch occupies residues 208–758; the sequence is MAANRPGGGY…WSQDYGDITI (551 aa). The MIT domain occupies 233–308; sequence HRRAFEYISK…SMARDRLHFL (76 aa). Disordered regions lie at residues 353-375 and 390-454; these read RVRS…SGRK and NKSQ…ASTP. 2 stretches are compositionally biased toward polar residues: residues 390-406 and 425-454; these read NKSQ…TSVG and QFSS…ASTP. The interval 443–455 is required for interaction with microtubules; it reads NNGPSGSGASTPV. 523–530 serves as a coordination point for ATP; it reads GPPGNGKT.

It belongs to the AAA ATPase family. Spastin subfamily. In terms of assembly, homohexamer. The homohexamer is stabilized by ATP-binding. The homohexamer may adopt a ring conformation through which microtubules pass prior to being severed. Interacts with microtubules. Interacts with atl; may be involved in microtubule dynamics.

It localises to the membrane. The protein localises to the cytoplasm. The protein resides in the cytoskeleton. Its subcellular location is the microtubule organizing center. It is found in the centrosome. It localises to the chromosome. The protein localises to the lipid droplet. The enzyme catalyses n ATP + n H2O + a microtubule = n ADP + n phosphate + (n+1) alpha/beta tubulin heterodimers.. Its function is as follows. ATP-dependent microtubule severing protein. Stimulates microtubule minus-end depolymerization and poleward microtubule flux in the mitotic spindle. Regulates microtubule stability in the neuromuscular junction synapse. Involved in lipid metabolism by regulating the size and distribution of lipid droplets. Involved in axon regeneration by regulating microtubule severing. The sequence is that of Spastin from Drosophila erecta (Fruit fly).